A 118-amino-acid polypeptide reads, in one-letter code: Basic phospholipase A2 PA-12A (118 aa).

7 disulfide bridges follow: Cys-11-Cys-71, Cys-27-Cys-117, Cys-29-Cys-45, Cys-44-Cys-98, Cys-51-Cys-91, Cys-60-Cys-84, and Cys-78-Cys-89. Residues Tyr-28, Gly-30, and Gly-32 each contribute to the Ca(2+) site. Residue His-48 is part of the active site. Asp-49 provides a ligand contact to Ca(2+). Asp-92 is an active-site residue.

It belongs to the phospholipase A2 family. Group I subfamily. D49 sub-subfamily. Ca(2+) serves as cofactor. Expressed by the venom gland.

The protein localises to the secreted. The enzyme catalyses a 1,2-diacyl-sn-glycero-3-phosphocholine + H2O = a 1-acyl-sn-glycero-3-phosphocholine + a fatty acid + H(+). In terms of biological role, PLA2 catalyzes the calcium-dependent hydrolysis of the 2-acyl groups in 3-sn-phosphoglycerides. In Pseudechis australis (Mulga snake), this protein is Basic phospholipase A2 PA-12A.